The primary structure comprises 89 residues: Small ribosomal subunit protein uS15 (89 aa).

The protein belongs to the universal ribosomal protein uS15 family. Part of the 30S ribosomal subunit. Forms a bridge to the 50S subunit in the 70S ribosome, contacting the 23S rRNA.

Its function is as follows. One of the primary rRNA binding proteins, it binds directly to 16S rRNA where it helps nucleate assembly of the platform of the 30S subunit by binding and bridging several RNA helices of the 16S rRNA. In terms of biological role, forms an intersubunit bridge (bridge B4) with the 23S rRNA of the 50S subunit in the ribosome. The polypeptide is Small ribosomal subunit protein uS15 (Crocosphaera subtropica (strain ATCC 51142 / BH68) (Cyanothece sp. (strain ATCC 51142))).